A 557-amino-acid chain; its full sequence is uncharacterized protein (557 aa).

Residues 70 to 224 (KVVEKMNGKA…FNLVSLLKPG (155 aa)) form the Helicase ATP-binding domain. An ATP-binding site is contributed by 82 to 90 (ADEVGLGKT). A DEAH box motif is present at residues 175–178 (DEAH). The Helicase C-terminal domain occupies 363-524 (QVVDLIKKID…NFEEHLHDIL (162 aa)).

This sequence belongs to the SNF2/RAD54 helicase family.

This is an uncharacterized protein from Bacillus subtilis (strain 168).